The sequence spans 432 residues: uncharacterized protein (432 aa).

2 SIS domains span residues Trp105–Ser244 and Cys277–Pro422.

This is an uncharacterized protein from Saccharomyces cerevisiae (strain Lalvin EC1118 / Prise de mousse) (Baker's yeast).